Reading from the N-terminus, the 112-residue chain is MGYRKLGRPSDQRRAMLRNLVTDFLKYGRITTTEARAKEVRSISEKMITLGKRGDLHARRQALAYILDESVVKKLFDEIAPKYKDRQGGYTRILKLGPRRGDGAPLVIIELV.

It belongs to the bacterial ribosomal protein bL17 family. In terms of assembly, part of the 50S ribosomal subunit. Contacts protein L32.

The chain is Large ribosomal subunit protein bL17 from Thermoanaerobacter pseudethanolicus (strain ATCC 33223 / 39E) (Clostridium thermohydrosulfuricum).